The primary structure comprises 327 residues: Phenylalanine--tRNA ligase alpha subunit (327 aa).

Mg(2+) is bound at residue glutamate 252.

This sequence belongs to the class-II aminoacyl-tRNA synthetase family. Phe-tRNA synthetase alpha subunit type 1 subfamily. As to quaternary structure, tetramer of two alpha and two beta subunits. Requires Mg(2+) as cofactor.

Its subcellular location is the cytoplasm. The enzyme catalyses tRNA(Phe) + L-phenylalanine + ATP = L-phenylalanyl-tRNA(Phe) + AMP + diphosphate + H(+). This is Phenylalanine--tRNA ligase alpha subunit from Glaesserella parasuis serovar 5 (strain SH0165) (Haemophilus parasuis).